Reading from the N-terminus, the 40-residue chain is Photosystem II reaction center protein J (40 aa).

The helical transmembrane segment at 8–28 threads the bilayer; that stretch reads IPLWIVGTVTGILVIGLIGVF.

This sequence belongs to the PsbJ family. In terms of assembly, PSII is composed of 1 copy each of membrane proteins PsbA, PsbB, PsbC, PsbD, PsbE, PsbF, PsbH, PsbI, PsbJ, PsbK, PsbL, PsbM, PsbT, PsbX, PsbY, PsbZ, Psb30/Ycf12, at least 3 peripheral proteins of the oxygen-evolving complex and a large number of cofactors. It forms dimeric complexes.

It is found in the plastid. The protein resides in the chloroplast thylakoid membrane. Its function is as follows. One of the components of the core complex of photosystem II (PSII). PSII is a light-driven water:plastoquinone oxidoreductase that uses light energy to abstract electrons from H(2)O, generating O(2) and a proton gradient subsequently used for ATP formation. It consists of a core antenna complex that captures photons, and an electron transfer chain that converts photonic excitation into a charge separation. This Coffea arabica (Arabian coffee) protein is Photosystem II reaction center protein J.